Here is a 109-residue protein sequence, read N- to C-terminus: FK506-binding protein (109 aa).

The region spanning 20–108 (GKEITVHYTG…IFEVELLKVY (89 aa)) is the PPIase FKBP-type domain.

This sequence belongs to the FKBP-type PPIase family.

It carries out the reaction [protein]-peptidylproline (omega=180) = [protein]-peptidylproline (omega=0). With respect to regulation, inhibited by FK506. PPIases accelerate the folding of proteins. The chain is FK506-binding protein (fbp) from Neisseria meningitidis serogroup B (strain ATCC BAA-335 / MC58).